Here is a 1246-residue protein sequence, read N- to C-terminus: HMG2-induced ER-remodeling protein 1 (1246 aa).

3 disordered regions span residues lysine 19–threonine 241, histidine 263–isoleucine 288, and methionine 816–lysine 836. Residues lysine 27–serine 41 are compositionally biased toward low complexity. Over residues threonine 58–threonine 95 the composition is skewed to polar residues. The residue at position 102 (serine 102) is a Phosphoserine. Threonine 128 is modified (phosphothreonine). Low complexity-rich tracts occupy residues arginine 154 to asparagine 163 and serine 211 to serine 230. Residues serine 271–serine 282 are compositionally biased toward basic and acidic residues. Serine 277 carries the phosphoserine modification. Phosphoserine is present on serine 1013. Polar residues-rich tracts occupy residues serine 1109 to serine 1133 and serine 1200 to alanine 1215. Disordered regions lie at residues serine 1109–isoleucine 1157 and serine 1192–aspartate 1224. The residue at position 1130 (threonine 1130) is a Phosphothreonine. Phosphoserine occurs at positions 1200, 1204, and 1207.

Belongs to the GIP3/HER1 family. May interact with ribosomes.

It localises to the cytoplasm. Functionally, required for HMG2-induced endoplasmic reticulum-remodeling. The polypeptide is HMG2-induced ER-remodeling protein 1 (HER1) (Saccharomyces cerevisiae (strain ATCC 204508 / S288c) (Baker's yeast)).